We begin with the raw amino-acid sequence, 139 residues long: Endoribonuclease YbeY (139 aa).

Zn(2+)-binding residues include His-105, His-109, and Asp-115.

The protein belongs to the endoribonuclease YbeY family. The cofactor is Zn(2+).

The protein localises to the cytoplasm. Its function is as follows. Single strand-specific metallo-endoribonuclease involved in late-stage 70S ribosome quality control and in maturation of the 3' terminus of the 16S rRNA. The chain is Endoribonuclease YbeY from Flavobacterium johnsoniae (strain ATCC 17061 / DSM 2064 / JCM 8514 / BCRC 14874 / CCUG 350202 / NBRC 14942 / NCIMB 11054 / UW101) (Cytophaga johnsonae).